The chain runs to 310 residues: Probable metallo-hydrolase Mb2322c (310 aa).

The segment at 1–29 (MVATRGRPCPTNFSRPQRPRVAGNGTKSQ) is disordered. Residues His137, Asp139, Asp141, His142, His221, Asp242, and His288 each contribute to the Zn(2+) site.

It belongs to the metallo-beta-lactamase superfamily. It depends on Zn(2+) as a cofactor.

This is Probable metallo-hydrolase Mb2322c from Mycobacterium bovis (strain ATCC BAA-935 / AF2122/97).